Consider the following 80-residue polypeptide: Translational regulator CsrA (80 aa).

Belongs to the CsrA/RsmA family. Homodimer; the beta-strands of each monomer intercalate to form a hydrophobic core, while the alpha-helices form wings that extend away from the core.

It localises to the cytoplasm. Its function is as follows. A translational regulator that binds mRNA to regulate translation initiation and/or mRNA stability. Usually binds in the 5'-UTR at or near the Shine-Dalgarno sequence preventing ribosome-binding, thus repressing translation. Its main target seems to be the major flagellin gene, while its function is anatagonized by FliW. This chain is Translational regulator CsrA, found in Desulforamulus reducens (strain ATCC BAA-1160 / DSM 100696 / MI-1) (Desulfotomaculum reducens).